A 64-amino-acid chain; its full sequence is Beta-defensin 2 (64 aa).

A signal peptide spans 1 to 22 (MRLHHLLLVLFFVVLSAGSGFT). 3 disulfides stabilise this stretch: cysteine 31/cysteine 60, cysteine 38/cysteine 53, and cysteine 43/cysteine 61.

Belongs to the beta-defensin family.

The protein localises to the secreted. In terms of biological role, has bactericidal activity. The chain is Beta-defensin 2 (DEFB2) from Ovis aries (Sheep).